Here is a 118-residue protein sequence, read N- to C-terminus: uncharacterized protein (118 aa).

The next 3 helical transmembrane spans lie at 22-44 (IIASIVGAVIIAAAISALLFSIA), 54-71 (LSPLVYSIVSLAVIPVLR), and 78-99 (PILSLLTAFSIPILFLSGVEWL).

Its subcellular location is the cell membrane. This is an uncharacterized protein from Archaeoglobus fulgidus (strain ATCC 49558 / DSM 4304 / JCM 9628 / NBRC 100126 / VC-16).